A 95-amino-acid polypeptide reads, in one-letter code: Opiscorpine-1 (95 aa).

Residues 1–19 (MNNKLTALIFLGLLAIASC) form the signal peptide. Residues 55–95 (EFMCVANVDMTKSCDTHCQKASGEKGYCHGTKCKCGVPLSY) enclose the BetaSPN-type CS-alpha/beta domain. Cystine bridges form between Cys58–Cys82, Cys68–Cys87, and Cys72–Cys89.

This sequence belongs to the long chain scorpion toxin family. Class 3 subfamily. As to expression, expressed by the venom gland.

The protein localises to the secreted. Its function is as follows. The short synthetic peptide (20-54) has antimicrobial activity against the yeasts F.culmorum (IC(50)=8.8 uM) and F.oxysporum (IC(50)=10 uM), and the Gram-negative bacteria E.coli. This chain is Opiscorpine-1, found in Opistophthalmus carinatus (African yellow leg scorpion).